Consider the following 181-residue polypeptide: ATP-dependent protease subunit HslV (181 aa).

T7 is a catalytic residue. G166, C169, and T172 together coordinate Na(+).

This sequence belongs to the peptidase T1B family. HslV subfamily. In terms of assembly, a double ring-shaped homohexamer of HslV is capped on each side by a ring-shaped HslU homohexamer. The assembly of the HslU/HslV complex is dependent on binding of ATP.

The protein resides in the cytoplasm. The catalysed reaction is ATP-dependent cleavage of peptide bonds with broad specificity.. Allosterically activated by HslU binding. Protease subunit of a proteasome-like degradation complex believed to be a general protein degrading machinery. In Delftia acidovorans (strain DSM 14801 / SPH-1), this protein is ATP-dependent protease subunit HslV.